The chain runs to 128 residues: UPF0292 protein MJ1624 (128 aa).

Positions 23 to 105 constitute a Toprim domain; the sequence is EKPIIVEGKR…KVNTKIRHEI (83 aa). 3 residues coordinate Mg(2+): E29, D74, and D76.

This sequence belongs to the UPF0292 family. Requires Mg(2+) as cofactor.

The protein is UPF0292 protein MJ1624 of Methanocaldococcus jannaschii (strain ATCC 43067 / DSM 2661 / JAL-1 / JCM 10045 / NBRC 100440) (Methanococcus jannaschii).